The following is a 76-amino-acid chain: HERTHTGEKPFECSECHKRFTRDHHLKTHLRLHTGEKPYSCPHCPRHFVQVANLRRHLRVHTGERPYACARCPARF.

C2H2-type zinc fingers lie at residues 11–33 and 39–61; these read FECSECHKRFTRDHHLKTHLRLH and YSCPHCPRHFVQVANLRRHLRVH.

Belongs to the krueppel C2H2-type zinc-finger protein family.

It is found in the nucleus. Functionally, krueppel is a gap class segmentation protein. The polypeptide is Protein krueppel (Kr) (Manduca sexta (Tobacco hawkmoth)).